The following is a 392-amino-acid chain: MTAIIRQFLRLEASGGILLIVAAIIALIMANTPLSALYNEFLSIPIMIKFGALELDKPLILWVNDALMAIFFLVVGLEVKRELKEGSLAQRDRAIFPAIAAVGGMLAPALIYLFFNHGDAIGQQGWAIPAATDIAFALGVMALLGRRVPVELKVFLLALAIIDDLGVIVIIALFYSKSVALVPLLLAALITIMLFILNWRKVSNTAVYLVLGFILWVCILKSGIHATIAGVIVGFLIPLRDKEGASPSEELEHVLHPWVAYLILPLFAFSNAGVSLNGVTLDGMLSTLPVGIALGLFLGKPIGIFLFSWVSVKLGIAKLPDAINLKQIFAVSVLCGIGFTMSIFIAGLAFEGAIEAYNTYSKLGILVGSTMAAVVGYLLLNSVLPKLKQKQK.

11 helical membrane passes run 17–37 (ILLI…LSAL), 59–79 (LILW…GLEV), 95–115 (IFPA…YLFF), 125–145 (GWAI…ALLG), 154–174 (VFLL…IALF), 179–199 (VALV…ILNW), 213–233 (FILW…GVIV), 254–274 (VLHP…NAGV), 290–310 (VGIA…FSWV), 328–348 (IFAV…IAGL), and 363–383 (LGIL…LNSV).

The protein belongs to the NhaA Na(+)/H(+) (TC 2.A.33) antiporter family.

It localises to the cell inner membrane. The catalysed reaction is Na(+)(in) + 2 H(+)(out) = Na(+)(out) + 2 H(+)(in). Na(+)/H(+) antiporter that extrudes sodium in exchange for external protons. In Proteus mirabilis (strain HI4320), this protein is Na(+)/H(+) antiporter NhaA.